Consider the following 431-residue polypeptide: Histidinol dehydrogenase (431 aa).

Positions 130, 192, and 215 each coordinate NAD(+). The substrate site is built by S238, Q260, and H263. Q260 and H263 together coordinate Zn(2+). Active-site proton acceptor residues include E328 and H329. Substrate-binding residues include H329, D362, E416, and H421. Zn(2+) is bound at residue D362. H421 lines the Zn(2+) pocket.

It belongs to the histidinol dehydrogenase family. Zn(2+) serves as cofactor.

The enzyme catalyses L-histidinol + 2 NAD(+) + H2O = L-histidine + 2 NADH + 3 H(+). Its pathway is amino-acid biosynthesis; L-histidine biosynthesis; L-histidine from 5-phospho-alpha-D-ribose 1-diphosphate: step 9/9. Catalyzes the sequential NAD-dependent oxidations of L-histidinol to L-histidinaldehyde and then to L-histidine. The sequence is that of Histidinol dehydrogenase from Thermosynechococcus vestitus (strain NIES-2133 / IAM M-273 / BP-1).